Here is an 878-residue protein sequence, read N- to C-terminus: MutS protein homolog 4 (878 aa).

The interval 22 to 41 (NSSNSISKPSTKKSIRNQKS) is disordered. 634 to 641 (GCNMSGKS) serves as a coordination point for ATP.

This sequence belongs to the DNA mismatch repair MutS family. As to quaternary structure, heterooligomer of MSH4 and MSH5.

Involved in meiotic recombination. Facilitate crossovers between homologs during meiosis. The sequence is that of MutS protein homolog 4 (MSH4) from Saccharomyces cerevisiae (strain ATCC 204508 / S288c) (Baker's yeast).